The primary structure comprises 226 residues: Putative O-methyltransferase Mvan_4497 (226 aa).

S-adenosyl-L-methionine is bound by residues V53, E75, 77–78, S83, D101, and V102; that span reads GT. D149 is a binding site for substrate.

It belongs to the class I-like SAM-binding methyltransferase superfamily. Cation-dependent O-methyltransferase family.

The chain is Putative O-methyltransferase Mvan_4497 from Mycolicibacterium vanbaalenii (strain DSM 7251 / JCM 13017 / BCRC 16820 / KCTC 9966 / NRRL B-24157 / PYR-1) (Mycobacterium vanbaalenii).